The sequence spans 700 residues: E3 ubiquitin-protein ligase SspH1 (700 aa).

Positions 1–395 (MFNIRNTQPS…HSGIRIHFDM (395 aa)) are interaction with target proteins. LRR repeat units follow at residues 217–238 (HITT…PEGL), 239–257 (RELE…SLPQ), 258–279 (GLQK…PPGL), 280–297 (GDLA…EMPP), 298–319 (ALRE…PSGL), 320–337 (QKLW…EMSP), 338–360 (GLQE…TGLS), and 361–381 (SAAR…QALR). The tract at residues 396–403 (AGPSVPRE) is linker. The tract at residues 404–700 (ARALHLAVAD…SYLTARWRLN (297 aa)) is E3 ubiquitin-protein ligase catalytic domain. The 295-residue stretch at 406-700 (ALHLAVADWL…SYLTARWRLN (295 aa)) folds into the NEL domain. Cys-492 acts as the Glycyl thioester intermediate in catalysis.

Belongs to the LRR-containing bacterial E3 ligase family. In terms of assembly, interacts (via leucine-rich repeat region) with host PKN1 (via the second REM repeat). In terms of processing, ubiquitinated in the presence of host E1 ubiquitin-activating enzyme, E2 ubiquitin-conjugating enzyme and ubiquitin.

It localises to the secreted. The protein localises to the host cytoplasm. The protein resides in the host nucleus. It catalyses the reaction S-ubiquitinyl-[E2 ubiquitin-conjugating enzyme]-L-cysteine + [acceptor protein]-L-lysine = [E2 ubiquitin-conjugating enzyme]-L-cysteine + N(6)-ubiquitinyl-[acceptor protein]-L-lysine.. Its activity is regulated as follows. Exists in an autoinhibited state in the absence of substrate protein, due to interactions of the leucine-rich repeat domain with the catalytic domain. Is activated upon binding to a substrate protein. Functionally, effector proteins function to alter host cell physiology and promote bacterial survival in host tissues. This protein is an E3 ubiquitin-protein ligase that interferes with the host's ubiquitination pathway and targets host proteins for proteasomal degradation. Can ubiquitinate ubiquitin, giving rise to polyubiquitin chains (in vitro). Polyubiquitinates host PKN1, leading to its proteasomal degradation. Down-modulates production of host pro-inflammatory cytokines by inhibiting NF-kappa-B-dependent gene expression; this depends only partially on its E3 ubiquitin-protein ligase activity. This chain is E3 ubiquitin-protein ligase SspH1 (sspH1), found in Salmonella typhimurium (strain 14028s / SGSC 2262).